The chain runs to 384 residues: Tryptophan--tRNA ligase (384 aa).

Residues 81–89 carry the 'HIGH' region motif; it reads PSGPMHIGH. The short motif at 252-256 is the 'KMSKS' region element; that stretch reads KMSAS.

It belongs to the class-I aminoacyl-tRNA synthetase family.

It is found in the cytoplasm. It carries out the reaction tRNA(Trp) + L-tryptophan + ATP = L-tryptophyl-tRNA(Trp) + AMP + diphosphate + H(+). The protein is Tryptophan--tRNA ligase of Thermococcus sibiricus (strain DSM 12597 / MM 739).